The primary structure comprises 147 residues: Hemoglobin subunit gamma (147 aa).

The Globin domain occupies 3–147 (NFTAEDKAAI…VASALASRYH (145 aa)). Heme b-binding residues include His64 and His93.

It belongs to the globin family. As to quaternary structure, heterotetramer of two alpha chains and two gamma chains in fetal hemoglobin (Hb F). Red blood cells.

Functionally, gamma chains make up the fetal hemoglobin F, in combination with alpha chains. In Alouatta seniculus (Red howler monkey), this protein is Hemoglobin subunit gamma (HBG).